The chain runs to 670 residues: uncharacterized protein (670 aa).

The next 10 helical transmembrane spans lie at 23–42, 47–69, 76–98, 118–140, 153–170, 381–403, 410–432, 437–454, 461–483, and 493–510; these read YALR…YYLN, YWAM…SKSL, LLGA…FFLL, VAYA…VNIT, VCEV…MMIL, QWDA…SAVA, SLLM…GLMV, LWQF…MQLL, FAAL…NPPV, and NLAK…FAIL.

The protein belongs to the aromatic acid exporter ArAE (TC 2.A.85) family.

The protein localises to the cell membrane. This is an uncharacterized protein from Escherichia coli (strain K12).